The chain runs to 134 residues: Prolactin (134 aa).

The cysteines at positions 126 and 134 are disulfide-linked.

Belongs to the somatotropin/prolactin family.

It localises to the secreted. The sequence is that of Prolactin from Bufo japonicus (Japanese common toad).